A 338-amino-acid polypeptide reads, in one-letter code: Aspartate carbamoyltransferase catalytic subunit (338 aa).

Arginine 72 and threonine 73 together coordinate carbamoyl phosphate. Lysine 100 is a binding site for L-aspartate. Carbamoyl phosphate is bound by residues arginine 122, histidine 152, and glutamine 155. L-aspartate is bound by residues arginine 186 and arginine 243. Positions 284 and 285 each coordinate carbamoyl phosphate.

It belongs to the aspartate/ornithine carbamoyltransferase superfamily. ATCase family. As to quaternary structure, heterododecamer (2C3:3R2) of six catalytic PyrB chains organized as two trimers (C3), and six regulatory PyrI chains organized as three dimers (R2).

It catalyses the reaction carbamoyl phosphate + L-aspartate = N-carbamoyl-L-aspartate + phosphate + H(+). It functions in the pathway pyrimidine metabolism; UMP biosynthesis via de novo pathway; (S)-dihydroorotate from bicarbonate: step 2/3. In terms of biological role, catalyzes the condensation of carbamoyl phosphate and aspartate to form carbamoyl aspartate and inorganic phosphate, the committed step in the de novo pyrimidine nucleotide biosynthesis pathway. The polypeptide is Aspartate carbamoyltransferase catalytic subunit (Acinetobacter baumannii (strain SDF)).